Here is a 616-residue protein sequence, read N- to C-terminus: Glycogenin-1 (616 aa).

UDP-binding residues include Leu10, Tyr16, and Arg95. 11 residues coordinate UDP-alpha-D-glucose: Leu10, Tyr16, Arg95, Lys104, Asp120, Asp122, Asn158, Ser159, Asp185, Asp188, and Gln189. 2 residues coordinate UDP: Asp120 and Asp122. The Mn(2+) site is built by Asp120 and Asp122. Tyr230 carries O-linked (Glc...) tyrosine glycosylation. Residues His247, Gly250, and Lys253 each coordinate UDP. Position 247 (His247) interacts with Mn(2+). Residues Gly250 and Lys253 each contribute to the UDP-alpha-D-glucose site. The segment covering 283–302 (HQLNNEVSKPKISDSDKTET) has biased composition (basic and acidic residues). Disordered regions lie at residues 283–320 (HQLN…PTTN), 335–354 (NQNA…NPVP), and 371–516 (TNQP…SVDD). A compositionally biased stretch (basic and acidic residues) spans 377-386 (ESREYSKEND). The span at 400-419 (SPPNSTQEPNSSYSVVSTQA) shows a compositional bias: polar residues. Low complexity predominate over residues 450–461 (STAASSNNNVSN). Composition is skewed to polar residues over residues 462–485 (QPDN…PSNP) and 492–503 (DNIQKPSVSTND). O-linked (Glc...) tyrosine glycosylation occurs at Tyr598.

It belongs to the glycosyltransferase 8 family. Glycogenin subfamily. Requires Mn(2+) as cofactor.

The protein localises to the cytoplasm. It localises to the vacuole. The catalysed reaction is L-tyrosyl-[glycogenin] + UDP-alpha-D-glucose = alpha-D-glucosyl-L-tyrosyl-[glycogenin] + UDP + H(+). The enzyme catalyses [1,4-alpha-D-glucosyl](n)-L-tyrosyl-[glycogenin] + UDP-alpha-D-glucose = [1,4-alpha-D-glucosyl](n+1)-L-tyrosyl-[glycogenin] + UDP + H(+). Self-glucosylating initiator of glycogen synthesis. It catalyzes the formation of a short alpha (1,4)-glucosyl chain covalently attached via a glucose 1-O-tyrosyl linkage to internal tyrosine residues and these chains act as primers for the elongation reaction catalyzed by glycogen synthase. Capable of transferring glucosyl residues to unbound acceptors such as free oligoglucans or oligoglucan derivatives. The sequence is that of Glycogenin-1 (GLG1) from Saccharomyces cerevisiae (strain YJM789) (Baker's yeast).